The sequence spans 359 residues: Membrane-bound lytic murein transglycosylase C (359 aa).

The signal sequence occupies residues 1–16 (MKKYLALALIAPLLIS). C17 is lipidated: N-palmitoyl cysteine. Residue C17 is the site of S-diacylglycerol cysteine attachment.

Belongs to the transglycosylase Slt family.

The protein localises to the cell outer membrane. It catalyses the reaction Exolytic cleavage of the (1-&gt;4)-beta-glycosidic linkage between N-acetylmuramic acid (MurNAc) and N-acetylglucosamine (GlcNAc) residues in peptidoglycan, from either the reducing or the non-reducing ends of the peptidoglycan chains, with concomitant formation of a 1,6-anhydrobond in the MurNAc residue.. Murein-degrading enzyme. May play a role in recycling of muropeptides during cell elongation and/or cell division. The chain is Membrane-bound lytic murein transglycosylase C from Escherichia coli O8 (strain IAI1).